Reading from the N-terminus, the 687-residue chain is Glycine--tRNA ligase beta subunit (687 aa).

This sequence belongs to the class-II aminoacyl-tRNA synthetase family. In terms of assembly, tetramer of two alpha and two beta subunits.

Its subcellular location is the cytoplasm. The catalysed reaction is tRNA(Gly) + glycine + ATP = glycyl-tRNA(Gly) + AMP + diphosphate. The protein is Glycine--tRNA ligase beta subunit of Neisseria meningitidis serogroup C / serotype 2a (strain ATCC 700532 / DSM 15464 / FAM18).